A 352-amino-acid chain; its full sequence is DNA integrity scanning protein DisA (352 aa).

Residues 3 to 143 enclose the DAC domain; it reads DERIVLALKS…FKYSLSEVSV (141 aa). ATP-binding positions include glycine 70, leucine 88, and 101–105; that span reads IRHRT.

Belongs to the DisA family. As to quaternary structure, homooctamer. Requires Mg(2+) as cofactor.

It catalyses the reaction 2 ATP = 3',3'-c-di-AMP + 2 diphosphate. Its function is as follows. Participates in a DNA-damage check-point that is active prior to asymmetric division when DNA is damaged. DisA forms globular foci that rapidly scan along the chromosomes during sporulation, searching for lesions. When a lesion is present, DisA pauses at the lesion site. This triggers a cellular response that culminates in a temporary block in sporulation initiation. Functionally, also has diadenylate cyclase activity, catalyzing the condensation of 2 ATP molecules into cyclic di-AMP (c-di-AMP). c-di-AMP acts as a signaling molecule that couples DNA integrity with progression of sporulation. The rise in c-di-AMP level generated by DisA while scanning the chromosome, operates as a positive signal that advances sporulation; upon encountering a lesion, the DisA focus arrests at the damaged site and halts c-di-AMP synthesis. The protein is DNA integrity scanning protein DisA of Carboxydothermus hydrogenoformans (strain ATCC BAA-161 / DSM 6008 / Z-2901).